The chain runs to 437 residues: Citrate synthase (437 aa).

Residues histidine 316 and aspartate 372 contribute to the active site.

This sequence belongs to the citrate synthase family. As to quaternary structure, homohexamer.

The catalysed reaction is oxaloacetate + acetyl-CoA + H2O = citrate + CoA + H(+). The protein operates within carbohydrate metabolism; tricarboxylic acid cycle; isocitrate from oxaloacetate: step 1/2. With respect to regulation, weakly inhibited by ATP (apparent Ki = 10 mm). The protein is Citrate synthase (gltA) of Corynebacterium glutamicum (strain ATCC 13032 / DSM 20300 / JCM 1318 / BCRC 11384 / CCUG 27702 / LMG 3730 / NBRC 12168 / NCIMB 10025 / NRRL B-2784 / 534).